A 276-amino-acid chain; its full sequence is Cis-2,3-dihydrobiphenyl-2,3-diol dehydrogenase (276 aa).

9–33 is a binding site for NAD(+); it reads LVTGGGSGLGRAIVDRFVAEGARVA. Serine 142 lines the substrate pocket. The Proton acceptor role is filled by tyrosine 155.

Belongs to the short-chain dehydrogenases/reductases (SDR) family.

It catalyses the reaction (2R,3S)-3-phenylcyclohexa-3,5-diene-1,2-diol + NAD(+) = biphenyl-2,3-diol + NADH + H(+). The protein operates within xenobiotic degradation; biphenyl degradation; 2-hydroxy-2,4-pentadienoate and benzoate from biphenyl: step 2/4. The polypeptide is Cis-2,3-dihydrobiphenyl-2,3-diol dehydrogenase (bphB) (Pseudomonas sp. (strain KKS102)).